The following is a 700-amino-acid chain: Elongation factor G 1 (700 aa).

The tr-type G domain maps to 8 to 290; it reads QNYRNIGISA…AVIEFMPSPI (283 aa). Residues 17–24, 88–92, and 142–145 contribute to the GTP site; these read AHIDAGKT, DTPGH, and NKMD.

Belongs to the TRAFAC class translation factor GTPase superfamily. Classic translation factor GTPase family. EF-G/EF-2 subfamily.

The protein localises to the cytoplasm. Functionally, catalyzes the GTP-dependent ribosomal translocation step during translation elongation. During this step, the ribosome changes from the pre-translocational (PRE) to the post-translocational (POST) state as the newly formed A-site-bound peptidyl-tRNA and P-site-bound deacylated tRNA move to the P and E sites, respectively. Catalyzes the coordinated movement of the two tRNA molecules, the mRNA and conformational changes in the ribosome. This is Elongation factor G 1 from Polaromonas sp. (strain JS666 / ATCC BAA-500).